The chain runs to 335 residues: Glyceraldehyde-3-phosphate dehydrogenase (335 aa).

Residues 10–11 (RI), D33, K77, and T119 contribute to the NAD(+) site. D-glyceraldehyde 3-phosphate contacts are provided by residues 150–152 (SCT), T181, 210–211 (TG), and R233. C151 functions as the Nucleophile in the catalytic mechanism. N315 contributes to the NAD(+) binding site.

It belongs to the glyceraldehyde-3-phosphate dehydrogenase family. As to quaternary structure, homotetramer.

Its subcellular location is the cytoplasm. It catalyses the reaction D-glyceraldehyde 3-phosphate + phosphate + NAD(+) = (2R)-3-phospho-glyceroyl phosphate + NADH + H(+). Its pathway is carbohydrate degradation; glycolysis; pyruvate from D-glyceraldehyde 3-phosphate: step 1/5. Functionally, catalyzes the oxidative phosphorylation of glyceraldehyde 3-phosphate (G3P) to 1,3-bisphosphoglycerate (BPG) using the cofactor NAD. The first reaction step involves the formation of a hemiacetal intermediate between G3P and a cysteine residue, and this hemiacetal intermediate is then oxidized to a thioester, with concomitant reduction of NAD to NADH. The reduced NADH is then exchanged with the second NAD, and the thioester is attacked by a nucleophilic inorganic phosphate to produce BPG. The protein is Glyceraldehyde-3-phosphate dehydrogenase (gap) of Chlamydia muridarum (strain MoPn / Nigg).